The primary structure comprises 318 residues: Pyrimidine-specific ribonucleoside hydrolase RihA (318 aa).

H240 is an active-site residue.

The protein belongs to the IUNH family. RihA subfamily.

In terms of biological role, hydrolyzes cytidine or uridine to ribose and cytosine or uracil, respectively. This is Pyrimidine-specific ribonucleoside hydrolase RihA from Shewanella sp. (strain MR-7).